Consider the following 78-residue polypeptide: MNRTKLVLGAVILASTMLAGCSSNAKIDQLSSDVQTLNAKVDQLSNDVNAVRADVQAAKDDAARANQRLDNQAQAYKK.

Residues 1–20 form the signal peptide; that stretch reads MNRTKLVLGAVILASTMLAG. A lipid anchor (N-palmitoyl cysteine) is attached at Cys-21. A lipid anchor (S-diacylglycerol cysteine) is attached at Cys-21. 2 consecutive repeats follow at residues 24-34 and 38-48; these read NAKIDQLSSDV and NAKVDQLSNDV. Positions 27–75 form a coiled coil; the sequence is IDQLSSDVQTLNAKVDQLSNDVNAVRADVQAAKDDAARANQRLDNQAQA. An N6-murein peptidoglycan lysine modification is found at Lys-78.

Belongs to the Lpp family. As to quaternary structure, homotrimer.

The protein resides in the cell outer membrane. The protein localises to the secreted. Its subcellular location is the cell wall. In terms of biological role, a highly abundant outer membrane lipoprotein that controls the distance between the inner and outer membranes. The only protein known to be covalently linked to the peptidoglycan network (PGN). Also non-covalently binds the PGN. The link between the cell outer membrane and PGN contributes to maintenance of the structural and functional integrity of the cell envelope, and maintains the correct distance between the PGN and the outer membrane. In Yersinia pestis, this protein is Major outer membrane lipoprotein Lpp.